Consider the following 418-residue polypeptide: CinA-like protein (418 aa).

It belongs to the CinA family.

The protein is CinA-like protein of Leptospira borgpetersenii serovar Hardjo-bovis (strain L550).